A 346-amino-acid chain; its full sequence is Quinolinate synthase (346 aa).

Residues histidine 47 and serine 68 each coordinate iminosuccinate. Residue cysteine 113 participates in [4Fe-4S] cluster binding. Iminosuccinate-binding positions include 139–141 and serine 156; that span reads YAN. Position 200 (cysteine 200) interacts with [4Fe-4S] cluster. Residues 226-228 and threonine 243 each bind iminosuccinate; that span reads HPE. Cysteine 297 contacts [4Fe-4S] cluster.

It belongs to the quinolinate synthase family. Type 1 subfamily. [4Fe-4S] cluster is required as a cofactor.

Its subcellular location is the cytoplasm. The catalysed reaction is iminosuccinate + dihydroxyacetone phosphate = quinolinate + phosphate + 2 H2O + H(+). It functions in the pathway cofactor biosynthesis; NAD(+) biosynthesis; quinolinate from iminoaspartate: step 1/1. Functionally, catalyzes the condensation of iminoaspartate with dihydroxyacetone phosphate to form quinolinate. The sequence is that of Quinolinate synthase from Photorhabdus laumondii subsp. laumondii (strain DSM 15139 / CIP 105565 / TT01) (Photorhabdus luminescens subsp. laumondii).